The primary structure comprises 171 residues: 3-hydroxydecanoyl-[acyl-carrier-protein] dehydratase (171 aa).

His-70 is an active-site residue.

Belongs to the thioester dehydratase family. FabA subfamily. Homodimer.

The protein localises to the cytoplasm. The enzyme catalyses a (3R)-hydroxyacyl-[ACP] = a (2E)-enoyl-[ACP] + H2O. It catalyses the reaction (3R)-hydroxydecanoyl-[ACP] = (2E)-decenoyl-[ACP] + H2O. The catalysed reaction is (2E)-decenoyl-[ACP] = (3Z)-decenoyl-[ACP]. It functions in the pathway lipid metabolism; fatty acid biosynthesis. Functionally, necessary for the introduction of cis unsaturation into fatty acids. Catalyzes the dehydration of (3R)-3-hydroxydecanoyl-ACP to E-(2)-decenoyl-ACP and then its isomerization to Z-(3)-decenoyl-ACP. Can catalyze the dehydratase reaction for beta-hydroxyacyl-ACPs with saturated chain lengths up to 16:0, being most active on intermediate chain length. The sequence is that of 3-hydroxydecanoyl-[acyl-carrier-protein] dehydratase from Pseudomonas putida (strain ATCC 700007 / DSM 6899 / JCM 31910 / BCRC 17059 / LMG 24140 / F1).